The following is a 335-amino-acid chain: Ornithine carbamoyltransferase, catabolic (335 aa).

Residues 59–62 (STRT), Gln-86, Arg-110, and 137–140 (HPTQ) each bind carbamoyl phosphate. L-ornithine-binding positions include Asn-169, Asp-233, and 237–238 (SM). Carbamoyl phosphate-binding positions include 274–275 (CL) and Arg-319.

It belongs to the aspartate/ornithine carbamoyltransferase superfamily. OTCase family.

It localises to the cytoplasm. The enzyme catalyses carbamoyl phosphate + L-ornithine = L-citrulline + phosphate + H(+). It functions in the pathway amino-acid degradation; L-arginine degradation via ADI pathway; carbamoyl phosphate from L-arginine: step 2/2. In terms of biological role, reversibly catalyzes the transfer of the carbamoyl group from carbamoyl phosphate (CP) to the N(epsilon) atom of ornithine (ORN) to produce L-citrulline. In Bacillus licheniformis (strain ATCC 14580 / DSM 13 / JCM 2505 / CCUG 7422 / NBRC 12200 / NCIMB 9375 / NCTC 10341 / NRRL NRS-1264 / Gibson 46), this protein is Ornithine carbamoyltransferase, catabolic (arcB).